The sequence spans 141 residues: Large ribosomal subunit protein uL11 (141 aa).

Belongs to the universal ribosomal protein uL11 family. As to quaternary structure, part of the ribosomal stalk of the 50S ribosomal subunit. Interacts with L10 and the large rRNA to form the base of the stalk. L10 forms an elongated spine to which L12 dimers bind in a sequential fashion forming a multimeric L10(L12)X complex. Post-translationally, one or more lysine residues are methylated.

Functionally, forms part of the ribosomal stalk which helps the ribosome interact with GTP-bound translation factors. The polypeptide is Large ribosomal subunit protein uL11 (Roseobacter denitrificans (strain ATCC 33942 / OCh 114) (Erythrobacter sp. (strain OCh 114))).